The following is a 385-amino-acid chain: Glucans biosynthesis protein C (385 aa).

10 helical membrane-spanning segments follow: residues Ala17 to Trp37, Met60 to Leu80, Val91 to Gln111, Ile137 to Phe157, Lys173 to Ile193, Phe212 to Ile232, Leu239 to Leu259, Thr274 to Gly294, Ala311 to Thr331, and Trp338 to Ile358.

It belongs to the acyltransferase 3 family. OpgC subfamily.

The protein resides in the cell membrane. The protein operates within glycan metabolism; osmoregulated periplasmic glucan (OPG) biosynthesis. In terms of biological role, necessary for the succinyl substitution of periplasmic glucans. Could catalyze the transfer of succinyl residues from the cytoplasmic side of the membrane to the nascent glucan backbones on the periplasmic side of the membrane. The sequence is that of Glucans biosynthesis protein C from Shigella boydii serotype 4 (strain Sb227).